A 274-amino-acid polypeptide reads, in one-letter code: Thiamine kinase (274 aa).

This sequence belongs to the thiamine kinase family.

The enzyme catalyses thiamine + ATP = thiamine phosphate + ADP + H(+). It participates in cofactor biosynthesis; thiamine diphosphate biosynthesis; thiamine phosphate from thiamine: step 1/1. In terms of biological role, catalyzes the ATP-dependent phosphorylation of thiamine to thiamine phosphate. Is involved in thiamine salvage. This Shigella dysenteriae serotype 1 (strain Sd197) protein is Thiamine kinase.